The chain runs to 826 residues: Zinc phosphodiesterase ELAC protein 2 (826 aa).

The N-terminal 16 residues, 1-16 (MWALCSLLRSATGRTM), are a transit peptide targeting the mitochondrion. Residues 15-27 (TMSQGRTISQGSA) are compositionally biased toward polar residues. Disordered regions lie at residues 15–53 (TMSQ…GSSG) and 187–231 (SEQR…VSQR). A phosphoserine mark is found at Ser-199, Ser-208, Ser-212, Ser-229, Ser-618, and Ser-736. A compositionally biased stretch (basic and acidic residues) spans 208 to 224 (SPERSSDSESNESEPHL). Residues 798-826 (ALTDDLEDGEPQQKRAHTEEPQSKKVRAQ) are disordered. Over residues 808 to 820 (PQQKRAHTEEPQS) the composition is skewed to basic and acidic residues.

Belongs to the RNase Z family. As to quaternary structure, homodimer. Interacts with PTCD1. Zn(2+) serves as cofactor.

The protein resides in the mitochondrion. Its subcellular location is the mitochondrion matrix. It is found in the mitochondrion nucleoid. The protein localises to the nucleus. The enzyme catalyses Endonucleolytic cleavage of RNA, removing extra 3' nucleotides from tRNA precursor, generating 3' termini of tRNAs. A 3'-hydroxy group is left at the tRNA terminus and a 5'-phosphoryl group is left at the trailer molecule.. Functionally, zinc phosphodiesterase, which displays mitochondrial tRNA 3'-processing endonuclease activity. Involved in tRNA maturation, by removing a 3'-trailer from precursor tRNA. Associates with mitochondrial DNA complexes at the nucleoids to initiate RNA processing and ribosome assembly. The polypeptide is Zinc phosphodiesterase ELAC protein 2 (ELAC2) (Macaca fascicularis (Crab-eating macaque)).